A 65-amino-acid polypeptide reads, in one-letter code: MKTSVLLFMLGLTFLFDGLAAINLQEGERTCYDIGELCSSDKPCCSGYYCSPRWGWCIYSTRGGR.

A signal peptide spans 1-21; sequence MKTSVLLFMLGLTFLFDGLAA. A propeptide spanning residues 22 to 29 is cleaved from the precursor; it reads INLQEGER. Intrachain disulfides connect cysteine 31–cysteine 45, cysteine 38–cysteine 50, and cysteine 44–cysteine 57.

The protein belongs to the neurotoxin 10 (Hwtx-1) family. 31 (Jztx-15) subfamily. In terms of tissue distribution, expressed by the venom gland.

It localises to the secreted. In terms of biological role, probable ion channel inhibitor. This is U12-theraphotoxin-Cg1a from Chilobrachys guangxiensis (Chinese earth tiger tarantula).